The chain runs to 499 residues: Alpha-amylase 3 (499 aa).

The Ca(2+) site is built by asparagine 127 and aspartate 183. Residue aspartate 213 is the Nucleophile of the active site. Position 217 (histidine 217) interacts with Ca(2+). The active-site Proton donor is glutamate 248.

It belongs to the glycosyl hydrolase 13 family. Monomer. The cofactor is Ca(2+).

Its subcellular location is the cytoplasm. It catalyses the reaction Endohydrolysis of (1-&gt;4)-alpha-D-glucosidic linkages in polysaccharides containing three or more (1-&gt;4)-alpha-linked D-glucose units.. This chain is Alpha-amylase 3 (amyC), found in Dictyoglomus thermophilum (strain ATCC 35947 / DSM 3960 / H-6-12).